Here is a 117-residue protein sequence, read N- to C-terminus: Large ribosomal subunit protein bL20 (117 aa).

The protein belongs to the bacterial ribosomal protein bL20 family.

Its function is as follows. Binds directly to 23S ribosomal RNA and is necessary for the in vitro assembly process of the 50S ribosomal subunit. It is not involved in the protein synthesizing functions of that subunit. The protein is Large ribosomal subunit protein bL20 of Rickettsia canadensis (strain McKiel).